Consider the following 462-residue polypeptide: UDP-N-acetylmuramoylalanine--D-glutamate ligase (462 aa).

117 to 123 (GTNGKTT) contributes to the ATP binding site.

Belongs to the MurCDEF family.

Its subcellular location is the cytoplasm. The catalysed reaction is UDP-N-acetyl-alpha-D-muramoyl-L-alanine + D-glutamate + ATP = UDP-N-acetyl-alpha-D-muramoyl-L-alanyl-D-glutamate + ADP + phosphate + H(+). It participates in cell wall biogenesis; peptidoglycan biosynthesis. Its function is as follows. Cell wall formation. Catalyzes the addition of glutamate to the nucleotide precursor UDP-N-acetylmuramoyl-L-alanine (UMA). The sequence is that of UDP-N-acetylmuramoylalanine--D-glutamate ligase from Synechococcus sp. (strain CC9902).